The sequence spans 508 residues: MRKRYAALAIVLALILSLALPELLFQLYPSSAVLNVDKLLNPPPENPNPFAAEPPANKYLDSVWAESHRNSYCQASSPFEAPRFPEKLRFEYLTLRDLPITIAFSEPYEDGKRVAWVSTVGFTGKIAKIDLENFSLIDEITPEGHRMGISGAYSVLANRTFFVPKLNRIYAYGDNGRLSRIELKGVFELPEVCSGEEIVGITLTYDGMIAFATNFGRVGVVSPNFGDYALYPINQNCEIAETISNSIAADESGGIYVVTDKAVYRINWDGKSLRLGWRAEYQTGEQRGGRLGKGSGSTPSLMNCGEDRFVVITDGQRLMHMVLFWRDEIPEDWKGIEGRDRRIAAEVPVTFGFEKDESYSEQSVLVRNCSAAITNNRLGLRLLDLLPERLQPFSMLLSNVPGIAPYGVEKFEWDAEKRALRSVWASNVSIPNAIPTMSDKTNLLYAIGQRGGFWTLEAVNWESGEAVWYARISPLPAHNSFYAATEIGPDGCIYTGMLWGVARLCNAD.

The helical transmembrane segment at 7–29 (ALAIVLALILSLALPELLFQLYP) threads the bilayer.

The protein localises to the membrane. This is an uncharacterized protein from Archaeoglobus fulgidus (strain ATCC 49558 / DSM 4304 / JCM 9628 / NBRC 100126 / VC-16).